The chain runs to 74 residues: Coleoptericin (74 aa).

A disordered region spans residues 1–74; it reads SLQGGAPNFP…TWHVGGTYRR (74 aa).

It belongs to the coleoptericin family.

Its subcellular location is the secreted. Responsible for the anti Gram-negative activity of immune hemolymph of Z.atratus. The sequence is that of Coleoptericin from Zophobas atratus (Giant mealworm beetle).